The sequence spans 318 residues: ADP-L-glycero-D-manno-heptose-6-epimerase (318 aa).

NADP(+) is bound by residues 10-11 (FI), 31-32 (DD), Lys38, Lys53, and 79-83 (EGACS). The active-site Proton acceptor is the Tyr144. Lys148 lines the NADP(+) pocket. Asn173 serves as a coordination point for substrate. Val174 and Lys182 together coordinate NADP(+). Lys182 acts as the Proton acceptor in catalysis. Substrate contacts are provided by residues Ser184, His191, 205–208 (FEGC), Arg218, and Tyr282.

This sequence belongs to the NAD(P)-dependent epimerase/dehydratase family. HldD subfamily. As to quaternary structure, homopentamer. Requires NADP(+) as cofactor.

It carries out the reaction ADP-D-glycero-beta-D-manno-heptose = ADP-L-glycero-beta-D-manno-heptose. Its pathway is nucleotide-sugar biosynthesis; ADP-L-glycero-beta-D-manno-heptose biosynthesis; ADP-L-glycero-beta-D-manno-heptose from D-glycero-beta-D-manno-heptose 7-phosphate: step 4/4. Its function is as follows. Catalyzes the interconversion between ADP-D-glycero-beta-D-manno-heptose and ADP-L-glycero-beta-D-manno-heptose via an epimerization at carbon 6 of the heptose. The polypeptide is ADP-L-glycero-D-manno-heptose-6-epimerase (Aeromonas hydrophila subsp. hydrophila (strain ATCC 7966 / DSM 30187 / BCRC 13018 / CCUG 14551 / JCM 1027 / KCTC 2358 / NCIMB 9240 / NCTC 8049)).